A 277-amino-acid chain; its full sequence is Undecaprenyl-diphosphatase (277 aa).

A run of 7 helical transmembrane segments spans residues 3–23 (IALL…EFLP), 44–64 (AKVF…LVYW), 82–102 (QFAL…LLFG), 109–129 (LFTP…ILWA), 189–209 (TDFS…YSLF), 218–238 (ADAP…WLCI), and 253–273 (FAWY…SGVV).

This sequence belongs to the UppP family.

It is found in the cell inner membrane. It carries out the reaction di-trans,octa-cis-undecaprenyl diphosphate + H2O = di-trans,octa-cis-undecaprenyl phosphate + phosphate + H(+). Its function is as follows. Catalyzes the dephosphorylation of undecaprenyl diphosphate (UPP). Confers resistance to bacitracin. In Polaromonas naphthalenivorans (strain CJ2), this protein is Undecaprenyl-diphosphatase.